We begin with the raw amino-acid sequence, 685 residues long: A-type ATP synthase subunit I (685 aa).

7 helical membrane passes run 172–192, 348–368, 394–414, 464–484, 538–558, 604–624, and 626–646; these read VGGL…VAVP, EIVP…LMFP, VIAV…EVFG, LFMG…NGVI, LVLA…PIIY, MFVI…ADVV, and ALLY…LAFA.

This sequence belongs to the V-ATPase 116 kDa subunit family. Has multiple subunits with at least A(3), B(3), C, D, E, F, H, I and proteolipid K(x).

Its subcellular location is the cell membrane. Component of the A-type ATP synthase that produces ATP from ADP in the presence of a proton gradient across the membrane. In Aeropyrum pernix (strain ATCC 700893 / DSM 11879 / JCM 9820 / NBRC 100138 / K1), this protein is A-type ATP synthase subunit I.